Consider the following 225-residue polypeptide: Uracil-DNA glycosylase 1 (225 aa).

The active-site Proton acceptor is aspartate 68.

It belongs to the uracil-DNA glycosylase (UDG) superfamily. UNG family.

Its subcellular location is the cytoplasm. The enzyme catalyses Hydrolyzes single-stranded DNA or mismatched double-stranded DNA and polynucleotides, releasing free uracil.. Its function is as follows. Excises uracil residues from the DNA which can arise as a result of misincorporation of dUMP residues by DNA polymerase or due to deamination of cytosine. The chain is Uracil-DNA glycosylase 1 (ung1) from Streptomyces avermitilis (strain ATCC 31267 / DSM 46492 / JCM 5070 / NBRC 14893 / NCIMB 12804 / NRRL 8165 / MA-4680).